The sequence spans 581 residues: Probable peptidoglycan D,D-transpeptidase PenA (581 aa).

The chain crosses the membrane as a helical span at residues 28 to 48 (ISFVLMAIAVLFAGLIARGLY). Ser-310 acts as the Acyl-ester intermediate in catalysis.

This sequence belongs to the transpeptidase family. FtsI subfamily.

The protein localises to the cell inner membrane. The catalysed reaction is Preferential cleavage: (Ac)2-L-Lys-D-Ala-|-D-Ala. Also transpeptidation of peptidyl-alanyl moieties that are N-acyl substituents of D-alanine.. It participates in cell wall biogenesis; peptidoglycan biosynthesis. In terms of biological role, catalyzes cross-linking of the peptidoglycan cell wall at the division septum. The chain is Probable peptidoglycan D,D-transpeptidase PenA from Neisseria meningitidis serogroup A / serotype 4A (strain DSM 15465 / Z2491).